A 341-amino-acid chain; its full sequence is MTTILAIETSCDETGVGIARLDADGAVTLLADEVASSVDEHVRFGGVVPEIASRAHLEALGPTMRRALSAAGVTKPDVVAATIGPGLAGALLVGVAAAKAYSAAWGVPFYAVNHLGGHLAADVYQHGPLPECVALLVSGGHTHLLQVRSLGDPIVELGSTVDDAAGEAYDKVARLLGLGYPGGRVLDELARTGDREAIVFPRGMTGPRDAPYAFSFSGLKTAVARYLESHPDAVNADVAAGFQEAVADVLTRKAVRAATDLGVTTLLIAGGVAANSRLRELAEQRCAAAGLTLRIPRPGLCTDNGAMIASFAAHLVAAGAPPSPLDVPTDPGLPVVKAQVS.

The Fe cation site is built by His114 and His118. Residues 136-140 (LVSGG), Asp170, Gly183, Asp187, and Asn275 contribute to the substrate site. Residue Asp303 coordinates Fe cation.

This sequence belongs to the KAE1 / TsaD family. Fe(2+) is required as a cofactor.

Its subcellular location is the cytoplasm. It carries out the reaction L-threonylcarbamoyladenylate + adenosine(37) in tRNA = N(6)-L-threonylcarbamoyladenosine(37) in tRNA + AMP + H(+). In terms of biological role, required for the formation of a threonylcarbamoyl group on adenosine at position 37 (t(6)A37) in tRNAs that read codons beginning with adenine. Is involved in the transfer of the threonylcarbamoyl moiety of threonylcarbamoyl-AMP (TC-AMP) to the N6 group of A37, together with TsaE and TsaB. TsaD likely plays a direct catalytic role in this reaction. This Mycobacterium avium (strain 104) protein is tRNA N6-adenosine threonylcarbamoyltransferase.